We begin with the raw amino-acid sequence, 222 residues long: Putative N-acetylmannosamine-6-phosphate 2-epimerase (222 aa).

It belongs to the NanE family.

The catalysed reaction is an N-acyl-D-glucosamine 6-phosphate = an N-acyl-D-mannosamine 6-phosphate. It functions in the pathway amino-sugar metabolism; N-acetylneuraminate degradation; D-fructose 6-phosphate from N-acetylneuraminate: step 3/5. Its function is as follows. Converts N-acetylmannosamine-6-phosphate (ManNAc-6-P) to N-acetylglucosamine-6-phosphate (GlcNAc-6-P). This is Putative N-acetylmannosamine-6-phosphate 2-epimerase from Staphylococcus aureus (strain bovine RF122 / ET3-1).